Here is a 241-residue protein sequence, read N- to C-terminus: UDP-2,3-diacylglucosamine hydrolase (241 aa).

The Mn(2+) site is built by aspartate 9, histidine 11, aspartate 42, asparagine 79, and histidine 114. Asparagine 79 to arginine 80 contacts substrate. Positions 122, 160, 164, 167, and 195 each coordinate substrate. Mn(2+) contacts are provided by histidine 195 and histidine 197.

This sequence belongs to the LpxH family. Mn(2+) serves as cofactor.

It localises to the cell inner membrane. It catalyses the reaction UDP-2-N,3-O-bis[(3R)-3-hydroxytetradecanoyl]-alpha-D-glucosamine + H2O = 2-N,3-O-bis[(3R)-3-hydroxytetradecanoyl]-alpha-D-glucosaminyl 1-phosphate + UMP + 2 H(+). The protein operates within glycolipid biosynthesis; lipid IV(A) biosynthesis; lipid IV(A) from (3R)-3-hydroxytetradecanoyl-[acyl-carrier-protein] and UDP-N-acetyl-alpha-D-glucosamine: step 4/6. Hydrolyzes the pyrophosphate bond of UDP-2,3-diacylglucosamine to yield 2,3-diacylglucosamine 1-phosphate (lipid X) and UMP by catalyzing the attack of water at the alpha-P atom. Involved in the biosynthesis of lipid A, a phosphorylated glycolipid that anchors the lipopolysaccharide to the outer membrane of the cell. This chain is UDP-2,3-diacylglucosamine hydrolase, found in Shewanella frigidimarina (strain NCIMB 400).